The sequence spans 467 residues: Tel2-interacting protein 2 (467 aa).

Residues 4 to 45 are a coiled coil; the sequence is YKELARRLHTLQSKNEKEALEKQIDFLDKLVVEVDSLVHEQD.

The protein belongs to the TTI2 family. Component of the TTT complex composed of tel2, tti1 and tti2. Interacts with tel2 and ttiI1. Component of the ASTRA complex composed of at least rvb1, rvb2, tra1, tel2, tti1 and tti2.

It localises to the nucleus. In terms of biological role, component of the tel2-tti1-tti2 (TTT) complex that stabilizes protein levels of the phosphatidylinositol 3-kinase-related protein kinase (PIKK) family proteins. The TTT complex is involved in the cellular resistance to DNA damage stresses, like ionizing radiation (IR), ultraviolet (UV) and mitomycin C (MMC). Component of the ASTRA complex involved in chromatin remodeling. The protein is Tel2-interacting protein 2 of Schizosaccharomyces pombe (strain 972 / ATCC 24843) (Fission yeast).